The chain runs to 86 residues: Small ribosomal subunit protein bS20 (86 aa).

Belongs to the bacterial ribosomal protein bS20 family.

Functionally, binds directly to 16S ribosomal RNA. This Mycolicibacterium vanbaalenii (strain DSM 7251 / JCM 13017 / BCRC 16820 / KCTC 9966 / NRRL B-24157 / PYR-1) (Mycobacterium vanbaalenii) protein is Small ribosomal subunit protein bS20.